An 85-amino-acid polypeptide reads, in one-letter code: Makatoxin-2 (85 aa).

The first 19 residues, 1–19 (MNYLIVISFALLLMTSVES), serve as a signal peptide directing secretion. The 63-residue stretch at 21–83 (RDAYIADSEN…VPIRIPGPCR (63 aa)) folds into the LCN-type CS-alpha/beta domain. 4 disulfides stabilise this stretch: Cys31/Cys82, Cys35/Cys55, Cys41/Cys65, and Cys45/Cys67.

The protein belongs to the long (4 C-C) scorpion toxin superfamily. Sodium channel inhibitor family. Alpha subfamily. In terms of tissue distribution, expressed by the venom gland.

The protein resides in the secreted. Functionally, this protein markedly relaxes the rat carbachol-precontracted anococcygeus muscle. This relaxation is inhibited by the inhibitor of nitric oxide (NO) synthase, N-nitro-L-arginine methyl ester (L-NAME), suggesting that the response induced by this protein is NO-mediated. The polypeptide is Makatoxin-2 (Olivierus martensii (Manchurian scorpion)).